The sequence spans 303 residues: Ribonuclease HIII (303 aa).

The region spanning 85–302 (CSLIGSDEVG…TKKAYQLLKK (218 aa)) is the RNase H type-2 domain. Aspartate 91, glutamate 92, and aspartate 196 together coordinate a divalent metal cation.

Belongs to the RNase HII family. RnhC subfamily. Requires Mn(2+) as cofactor. The cofactor is Mg(2+).

The protein localises to the cytoplasm. The catalysed reaction is Endonucleolytic cleavage to 5'-phosphomonoester.. Functionally, endonuclease that specifically degrades the RNA of RNA-DNA hybrids. This chain is Ribonuclease HIII, found in Streptococcus mutans serotype c (strain ATCC 700610 / UA159).